The primary structure comprises 394 residues: Phosphoglycerate kinase (394 aa).

Substrate is bound by residues 21–23 (DFN), R36, 59–62 (HLGR), R118, and R151. S183 is modified (phosphoserine). Residues K201 and G292 each coordinate ATP. Phosphothreonine is present on T299. ATP is bound by residues E323 and 350 to 353 (GGDS).

Belongs to the phosphoglycerate kinase family. As to quaternary structure, monomer.

Its subcellular location is the cytoplasm. It catalyses the reaction (2R)-3-phosphoglycerate + ATP = (2R)-3-phospho-glyceroyl phosphate + ADP. It functions in the pathway carbohydrate degradation; glycolysis; pyruvate from D-glyceraldehyde 3-phosphate: step 2/5. The chain is Phosphoglycerate kinase from Bacillus thuringiensis subsp. konkukian (strain 97-27).